A 356-amino-acid chain; its full sequence is Tyrosine recombinase XerS (356 aa).

The Core-binding (CB) domain maps to 16–121; sequence IMPWYVLDYY…ALSSLYKYLT (106 aa). A Tyr recombinase domain is found at 169–354; it reads AFLDYVDKEY…VNDEQKNALD (186 aa). Active-site residues include R210, K234, H306, R309, and H332. Y341 acts as the O-(3'-phospho-DNA)-tyrosine intermediate in catalysis.

This sequence belongs to the 'phage' integrase family. XerS subfamily.

The protein localises to the cytoplasm. Its activity is regulated as follows. FtsK is required for recombination. Functionally, site-specific tyrosine recombinase, which acts by catalyzing the cutting and rejoining of the recombining DNA molecules. Essential to convert dimers of the bacterial chromosome into monomers to permit their segregation at cell division. The protein is Tyrosine recombinase XerS of Streptococcus pyogenes serotype M2 (strain MGAS10270).